Consider the following 73-residue polypeptide: Translation initiation factor IF-1 (73 aa).

An S1-like domain is found at 1-72 (MAKEEAIEKD…SKGRIVYRYK (72 aa)).

It belongs to the IF-1 family. Component of the 30S ribosomal translation pre-initiation complex which assembles on the 30S ribosome in the order IF-2 and IF-3, IF-1 and N-formylmethionyl-tRNA(fMet); mRNA recruitment can occur at any time during PIC assembly.

The protein resides in the cytoplasm. In terms of biological role, one of the essential components for the initiation of protein synthesis. Stabilizes the binding of IF-2 and IF-3 on the 30S subunit to which N-formylmethionyl-tRNA(fMet) subsequently binds. Helps modulate mRNA selection, yielding the 30S pre-initiation complex (PIC). Upon addition of the 50S ribosomal subunit IF-1, IF-2 and IF-3 are released leaving the mature 70S translation initiation complex. In Salinibacter ruber (strain DSM 13855 / M31), this protein is Translation initiation factor IF-1.